The following is a 1074-amino-acid chain: Formin-G (1074 aa).

In terms of domain architecture, GBD/FH3 spans 34-423 (LQMQQGSKTY…DKINEFEKKI (390 aa)). Disordered stretches follow at residues 476–507 (QSIS…DIQS) and 549–639 (FTPT…NPSS). Residues 481 to 503 (SQDSSNNQKASSSSSNTSTLNDS) show a composition bias toward low complexity. A coiled-coil region spans residues 502-530 (DSDIQSIQSSLKEATLEIERLKLAIEEKM). Positions 549–561 (FTPTSPDISNDGQ) are enriched in polar residues. Residues 568–610 (APPPSPSPPPPISGGGAPPPPPPPPPPPSGGGAPPPPPPPPPS) are compositionally biased toward pro residues. In terms of domain architecture, FH1 spans 597–623 (GGGAPPPPPPPPPSGGKKAGAPGAPPT). The FH2 domain maps to 631 to 1031 (NKPVINPSSK…ASGDNGAVQN (401 aa)). Residues 914–971 (DINDLEKQFNISKNNCKKVLEANIPSSSKFQSTIGSFLEKTEIDIKNLKENQKNIVDS) are a coiled coil. Residues 1037 to 1073 (GADPLAALANAIKLGQTGLRKRPGPENSSGGSQLNLN) form the DAD domain. Positions 1053–1074 (TGLRKRPGPENSSGGSQLNLNK) are disordered. Positions 1062–1074 (ENSSGGSQLNLNK) are enriched in polar residues.

Belongs to the formin homology family. Diaphanous subfamily. In terms of assembly, interacts (via GBD/FH3 domain) with activated Rho-GTPases.

Formins play an important role in the nucleation of actin and the formation of linear actin filaments. The sequence is that of Formin-G (forG) from Dictyostelium discoideum (Social amoeba).